Here is a 535-residue protein sequence, read N- to C-terminus: Peptide chain release factor 3 (535 aa).

A tr-type G domain is found at 8-277 (KRRRTFAIIS…TLVDLAPPPG (270 aa)). GTP is bound by residues 17-24 (SHPDAGKT), 85-89 (DTPGH), and 139-142 (NKLD).

It belongs to the TRAFAC class translation factor GTPase superfamily. Classic translation factor GTPase family. PrfC subfamily.

The protein localises to the cytoplasm. Increases the formation of ribosomal termination complexes and stimulates activities of RF-1 and RF-2. It binds guanine nucleotides and has strong preference for UGA stop codons. It may interact directly with the ribosome. The stimulation of RF-1 and RF-2 is significantly reduced by GTP and GDP, but not by GMP. The protein is Peptide chain release factor 3 of Nitrosomonas eutropha (strain DSM 101675 / C91 / Nm57).